The chain runs to 240 residues: Phosphoribosylaminoimidazole-succinocarboxamide synthase (240 aa).

Belongs to the SAICAR synthetase family.

It catalyses the reaction 5-amino-1-(5-phospho-D-ribosyl)imidazole-4-carboxylate + L-aspartate + ATP = (2S)-2-[5-amino-1-(5-phospho-beta-D-ribosyl)imidazole-4-carboxamido]succinate + ADP + phosphate + 2 H(+). Its pathway is purine metabolism; IMP biosynthesis via de novo pathway; 5-amino-1-(5-phospho-D-ribosyl)imidazole-4-carboxamide from 5-amino-1-(5-phospho-D-ribosyl)imidazole-4-carboxylate: step 1/2. This is Phosphoribosylaminoimidazole-succinocarboxamide synthase from Wigglesworthia glossinidia brevipalpis.